The primary structure comprises 265 residues: Tryptophan synthase alpha chain (265 aa).

Residues Glu-50 and Asp-61 each act as proton acceptor in the active site.

This sequence belongs to the TrpA family. As to quaternary structure, tetramer of two alpha and two beta chains.

The enzyme catalyses (1S,2R)-1-C-(indol-3-yl)glycerol 3-phosphate + L-serine = D-glyceraldehyde 3-phosphate + L-tryptophan + H2O. The protein operates within amino-acid biosynthesis; L-tryptophan biosynthesis; L-tryptophan from chorismate: step 5/5. Functionally, the alpha subunit is responsible for the aldol cleavage of indoleglycerol phosphate to indole and glyceraldehyde 3-phosphate. The sequence is that of Tryptophan synthase alpha chain from Trichodesmium erythraeum (strain IMS101).